Consider the following 223-residue polypeptide: Noggin (223 aa).

The signal sequence occupies residues 1-26 (MDPPRLRVATYLLLLSVGLLLHGGAC). N-linked (GlcNAc...) asparagine glycosylation is present at asparagine 61. 4 cysteine pairs are disulfide-bonded: cysteine 143/cysteine 180, cysteine 166/cysteine 217, cysteine 172/cysteine 219, and cysteine 195/cysteine 204.

This sequence belongs to the noggin family. In terms of assembly, homodimer.

Its subcellular location is the secreted. Its function is as follows. Inhibitor of bone morphogenetic proteins (BMP) signaling. In Takifugu rubripes (Japanese pufferfish), this protein is Noggin (nog).